A 601-amino-acid polypeptide reads, in one-letter code: Glutamine--fructose-6-phosphate aminotransferase [isomerizing] (601 aa).

The Nucleophile; for GATase activity role is filled by C2. One can recognise a Glutamine amidotransferase type-2 domain in the interval 2 to 218; the sequence is CGIVGYIGYD…DHEIVIVKKD (217 aa). 2 consecutive SIS domains span residues 284–423 and 453–591; these read IIND…EHGR and IATD…VDKP. Residue K596 is the For Fru-6P isomerization activity of the active site.

As to quaternary structure, homodimer.

It localises to the cytoplasm. It catalyses the reaction D-fructose 6-phosphate + L-glutamine = D-glucosamine 6-phosphate + L-glutamate. Catalyzes the first step in hexosamine metabolism, converting fructose-6P into glucosamine-6P using glutamine as a nitrogen source. The chain is Glutamine--fructose-6-phosphate aminotransferase [isomerizing] from Staphylococcus aureus (strain Mu50 / ATCC 700699).